Reading from the N-terminus, the 770-residue chain is DNA ligase 1 (770 aa).

The segment covering 1–18 has biased composition (low complexity); sequence MSTGEGTAEQTATGTPAQ. The segment at 1–27 is disordered; sequence MSTGEGTAEQTATGTPAQNGRESIPSD. NAD(+)-binding positions include 57-61, 106-107, and glutamate 142; these read DAEFD and SL. Lysine 144 acts as the N6-AMP-lysine intermediate in catalysis. NAD(+)-binding residues include arginine 165, glutamate 202, lysine 318, and lysine 342. Positions 439, 442, 458, and 464 each coordinate Zn(2+). Residues 657 to 746 enclose the BRCT domain; sequence STPRTLEGLT…PAAVGDAAEA (90 aa). A disordered region spans residues 741-770; the sequence is GDAAEADGGDAPEESAALQEEKAAAVEETA. Positions 744 to 753 are enriched in acidic residues; it reads AEADGGDAPE. Positions 759–770 are enriched in basic and acidic residues; it reads QEEKAAAVEETA.

Belongs to the NAD-dependent DNA ligase family. LigA subfamily. Mg(2+) serves as cofactor. It depends on Mn(2+) as a cofactor.

The catalysed reaction is NAD(+) + (deoxyribonucleotide)n-3'-hydroxyl + 5'-phospho-(deoxyribonucleotide)m = (deoxyribonucleotide)n+m + AMP + beta-nicotinamide D-nucleotide.. Its function is as follows. DNA ligase that catalyzes the formation of phosphodiester linkages between 5'-phosphoryl and 3'-hydroxyl groups in double-stranded DNA using NAD as a coenzyme and as the energy source for the reaction. It is essential for DNA replication and repair of damaged DNA. This chain is DNA ligase 1, found in Pseudarthrobacter chlorophenolicus (strain ATCC 700700 / DSM 12829 / CIP 107037 / JCM 12360 / KCTC 9906 / NCIMB 13794 / A6) (Arthrobacter chlorophenolicus).